Reading from the N-terminus, the 218-residue chain is tRNA (guanosine(18)-2'-O)-methyltransferase (218 aa).

S-adenosyl-L-methionine contacts are provided by Thr-111 and Ile-154.

Belongs to the class IV-like SAM-binding methyltransferase superfamily. RNA methyltransferase TrmH family.

It carries out the reaction guanosine(18) in tRNA + S-adenosyl-L-methionine = 2'-O-methylguanosine(18) in tRNA + S-adenosyl-L-homocysteine + H(+). Its function is as follows. Catalyzes the 2'-O methylation of guanosine at position 18 in tRNA. In Borreliella burgdorferi (strain ATCC 35210 / DSM 4680 / CIP 102532 / B31) (Borrelia burgdorferi), this protein is tRNA (guanosine(18)-2'-O)-methyltransferase.